We begin with the raw amino-acid sequence, 1767 residues long: Endo-alpha-N-acetylgalactosaminidase (1767 aa).

An N-terminal signal peptide occupies residues 1–39 (MNKGLFEKRCKYSIRKFSLGVASVMIGATFFGTSPVLAD). 2 stretches are compositionally biased toward basic and acidic residues: residues 63–75 (NDGH…KVGE) and 84–111 (DGPK…DKPA). Disordered stretches follow at residues 63-137 (NDGH…QGTV) and 301-324 (VKTD…GPEV). Low complexity predominate over residues 112 to 124 (AAKPETPKTVTPE). 2 stretches are compositionally biased toward basic and acidic residues: residues 127-137 (TVEKKEQQGTV) and 304-324 (DNQE…GPEV). Positions 577, 579, 581, 583, and 588 each coordinate Ca(2+). The catalytic stretch occupies residues 602–893 (GWKKVKDITA…DVMTKYFQHF (292 aa)). Aspartate 658 serves as a coordination point for substrate. Catalysis depends on aspartate 764, which acts as the Nucleophile. The active-site Proton donor/acceptor is the glutamate 796. Ca(2+) is bound by residues aspartate 1233, glutamate 1235, glutamate 1281, tryptophan 1284, and aspartate 1411. The LPXTG sorting signal motif lies at 1735-1739 (LPATG). A Pentaglycyl murein peptidoglycan amidated threonine modification is found at threonine 1738. Residues 1739–1767 (GESQFDTALFLASVSLALSALFVVKTKKD) constitute a propeptide, removed by sortase.

This sequence belongs to the glycosyl hydrolase 101 family. A subfamily.

Its subcellular location is the secreted. It localises to the cell wall. It catalyses the reaction a 3-O-[beta-D-galactosyl-(1-&gt;3)-N-acetyl-alpha-D-galactosaminyl]-L-threonyl-[protein] + H2O = beta-D-galactosyl-(1-&gt;3)-N-acetyl-D-galactosamine + L-threonyl-[protein]. The enzyme catalyses a 3-O-[beta-D-galactosyl-(1-&gt;3)-N-acetyl-alpha-D-galactosaminyl]-L-seryl-[protein] + H2O = beta-D-galactosyl-(1-&gt;3)-N-acetyl-D-galactosamine + L-seryl-[protein]. Its function is as follows. Involved in the breakdown of mucin-type O-linked glycans. Specifically removes the T-antigen disaccharide (Gal-beta-1,3-GalNAc-alpha) from extracellular host glycoproteins. Representative of a broadly important class of virulence factors. This is Endo-alpha-N-acetylgalactosaminidase from Streptococcus pneumoniae (strain ATCC BAA-255 / R6).